We begin with the raw amino-acid sequence, 425 residues long: MIDLRLLREDPDRVRASQRARGEDVALVDSLLSADERRRSSGVRFDELRSEQKALGKLIPKASPEERAELLKKAEQLKADVKAADVEQHEADEEAKRLLLQLGNLVHPDVPVGGEEDFVVLETHGTIRDFGAEGFEPKDHLELGEALGAIDVERGAKVSGSRFYYLTGVGALLELALVNAAIAQATEAGFIPMLTPALVRPRAMEGTGFLGQASENVYHLEKDDYYLVGTSEVPLAAYHMDEILDADKLPMRYAGFSPCFRREAGTYGKDTRGIFRVHQFDKVEMFSYVAPEDAENEHKRLLEWEKQWLTGLELPFQVIDVASGDLGASATRKFDCEAWIPTQGKYRELTSASNCDSFQARRLSVRMRDGKKVQPLATLNGTLCAVPRTIVAILENHQLPDGSVRVPEMLRPYLGGRELLEPVAK.

230 to 232 (TSE) contacts L-serine. ATP contacts are provided by residues 261–263 (RRE) and V277. Residue E284 coordinates L-serine. 348–351 (ELTS) provides a ligand contact to ATP. T382 is an L-serine binding site.

Belongs to the class-II aminoacyl-tRNA synthetase family. Type-1 seryl-tRNA synthetase subfamily. In terms of assembly, homodimer. The tRNA molecule binds across the dimer.

Its subcellular location is the cytoplasm. It carries out the reaction tRNA(Ser) + L-serine + ATP = L-seryl-tRNA(Ser) + AMP + diphosphate + H(+). It catalyses the reaction tRNA(Sec) + L-serine + ATP = L-seryl-tRNA(Sec) + AMP + diphosphate + H(+). It participates in aminoacyl-tRNA biosynthesis; selenocysteinyl-tRNA(Sec) biosynthesis; L-seryl-tRNA(Sec) from L-serine and tRNA(Sec): step 1/1. Catalyzes the attachment of serine to tRNA(Ser). Is also able to aminoacylate tRNA(Sec) with serine, to form the misacylated tRNA L-seryl-tRNA(Sec), which will be further converted into selenocysteinyl-tRNA(Sec). In Streptomyces avermitilis (strain ATCC 31267 / DSM 46492 / JCM 5070 / NBRC 14893 / NCIMB 12804 / NRRL 8165 / MA-4680), this protein is Serine--tRNA ligase 1.